A 157-amino-acid chain; its full sequence is Class-10 pathogenesis-related protein 1 (157 aa).

Belongs to the BetVI family. In terms of tissue distribution, high levels in roots and not detectable in hypocotyls, cotyledons, stems, leaves and flower buds of untreated plants. After induction, high levels are present in the vascular bundles of leaves.

The protein localises to the cytoplasm. In Medicago sativa (Alfalfa), this protein is Class-10 pathogenesis-related protein 1 (MSPR10-1).